The following is a 272-amino-acid chain: tRNA pseudouridine synthase A (272 aa).

Asp52 serves as the catalytic Nucleophile. Tyr110 is a substrate binding site.

Belongs to the tRNA pseudouridine synthase TruA family. Homodimer.

The enzyme catalyses uridine(38/39/40) in tRNA = pseudouridine(38/39/40) in tRNA. Functionally, formation of pseudouridine at positions 38, 39 and 40 in the anticodon stem and loop of transfer RNAs. The sequence is that of tRNA pseudouridine synthase A from Cupriavidus necator (strain ATCC 17699 / DSM 428 / KCTC 22496 / NCIMB 10442 / H16 / Stanier 337) (Ralstonia eutropha).